A 395-amino-acid chain; its full sequence is Na(+)/H(+) antiporter NhaA 1 (395 aa).

Transmembrane regions (helical) follow at residues Phe11–Val31, Met63–Val83, Val99–Phe119, Gly129–Gly149, Ile158–Phe178, Leu183–Leu203, Val223–Leu243, Val258–Val278, Gly282–Ile302, Ile332–Leu352, and Trp364–Leu384.

Belongs to the NhaA Na(+)/H(+) (TC 2.A.33) antiporter family.

It is found in the cell inner membrane. It catalyses the reaction Na(+)(in) + 2 H(+)(out) = Na(+)(out) + 2 H(+)(in). Functionally, na(+)/H(+) antiporter that extrudes sodium in exchange for external protons. The protein is Na(+)/H(+) antiporter NhaA 1 of Klebsiella pneumoniae subsp. pneumoniae (strain ATCC 700721 / MGH 78578).